The sequence spans 334 residues: tRNA N6-adenosine threonylcarbamoyltransferase (334 aa).

Fe cation is bound by residues H112 and H116. Substrate is bound by residues 135–139, D168, G181, D185, and N274; that span reads VVSGG. D303 contributes to the Fe cation binding site.

Belongs to the KAE1 / TsaD family. Fe(2+) is required as a cofactor.

It localises to the cytoplasm. It catalyses the reaction L-threonylcarbamoyladenylate + adenosine(37) in tRNA = N(6)-L-threonylcarbamoyladenosine(37) in tRNA + AMP + H(+). In terms of biological role, required for the formation of a threonylcarbamoyl group on adenosine at position 37 (t(6)A37) in tRNAs that read codons beginning with adenine. Is involved in the transfer of the threonylcarbamoyl moiety of threonylcarbamoyl-AMP (TC-AMP) to the N6 group of A37, together with TsaE and TsaB. TsaD likely plays a direct catalytic role in this reaction. The chain is tRNA N6-adenosine threonylcarbamoyltransferase from Anaeromyxobacter dehalogenans (strain 2CP-1 / ATCC BAA-258).